We begin with the raw amino-acid sequence, 329 residues long: Solute carrier family 35 member B1 (329 aa).

The next 8 membrane-spanning stretches (helical) occupy residues 21-41 (AVCF…QETI), 60-80 (TLVF…IQFF), 91-111 (WLYG…NSAL), 142-162 (YPMA…LFLY), 175-195 (VFGF…LTGV), 220-240 (TLVL…LAFT), 250-270 (ILLF…TVVY), and 292-312 (VLLF…LVFL). The Di-lysine motif motif lies at 325-329 (KKTTH).

The protein belongs to the nucleotide-sugar transporter family. SLC35B subfamily.

It localises to the endoplasmic reticulum membrane. Its function is as follows. Probable sugar transporter. This Danio rerio (Zebrafish) protein is Solute carrier family 35 member B1 (slc35b1).